We begin with the raw amino-acid sequence, 189 residues long: uncharacterized protein (189 aa).

Residues 1–23 (MVPPKPALWALLLALLGTAPSRA) form the signal peptide. Residue Asn72 is glycosylated (N-linked (GlcNAc...) asparagine).

This is an uncharacterized protein from Homo sapiens (Human).